A 271-amino-acid chain; its full sequence is Bis(5'-nucleosyl)-tetraphosphatase, symmetrical (271 aa).

Belongs to the Ap4A hydrolase family.

It carries out the reaction P(1),P(4)-bis(5'-adenosyl) tetraphosphate + H2O = 2 ADP + 2 H(+). In terms of biological role, hydrolyzes diadenosine 5',5'''-P1,P4-tetraphosphate to yield ADP. The sequence is that of Bis(5'-nucleosyl)-tetraphosphatase, symmetrical from Aliivibrio fischeri (strain ATCC 700601 / ES114) (Vibrio fischeri).